The following is a 501-amino-acid chain: Orsellinic acid/F9775 biosynthesis cluster protein D (501 aa).

The tract at residues 137–189 (EVTPTTEDEDDEENESENDEEEGDVDLEEQEDDNGGRQSTTVTTSPGPSAPSV) is disordered. Over residues 142-169 (TEDEDDEENESENDEEEGDVDLEEQEDD) the composition is skewed to acidic residues. A compositionally biased stretch (polar residues) spans 172 to 183 (GRQSTTVTTSPG).

Part of the gene cluster that mediates the biosynthesis of orsellinic acid, as well as of the cathepsin K inhibitors F9775 A and F9775 B. The non-reducing polyketide synthase orsA produces orsellinic acid by condensing acetyl-CoA with 3 malonyl-CoA units. Further modifications by the decarboxylase orsB and the tyrosinase-like protein orsC lead to the production of F9775 A and F9775 B. The functions of orsD and orsE remain unclear since only orsB and orsC are required to convert orsellinic acid into F9775 A and F9775 B. This Emericella nidulans (strain FGSC A4 / ATCC 38163 / CBS 112.46 / NRRL 194 / M139) (Aspergillus nidulans) protein is Orsellinic acid/F9775 biosynthesis cluster protein D.